The chain runs to 367 residues: Glycolate oxidase 1 (367 aa).

Met-1 carries the post-translational modification N-acetylmethionine. A glyoxylate-binding site is contributed by Tyr-24. Residues 77 to 79, Ser-106, 127 to 129, and Thr-155 contribute to the FMN site; these read PTA and QLY. Tyr-129 contacts glyoxylate. Position 164 (Arg-164) interacts with glyoxylate. Lys-230 and Ser-252 together coordinate FMN. Glyoxylate is bound by residues His-254 and Arg-257. The active-site Proton acceptor is His-254. Residues 285-289 and 308-309 each bind FMN; these read DGGVR and GR.

This sequence belongs to the FMN-dependent alpha-hydroxy acid dehydrogenase family. In terms of assembly, homotetramer. FMN serves as cofactor.

It is found in the peroxisome. The catalysed reaction is glycolate + O2 = glyoxylate + H2O2. The protein operates within photosynthesis; photorespiration; glycine from 2-phosphoglycolate: step 2/3. Functionally, catalyzes the oxidation of glycolate to glyoxylate, with a reduction of O2 to H2O2. Is a key enzyme in photorespiration in green plants. The sequence is that of Glycolate oxidase 1 (GLO1) from Arabidopsis thaliana (Mouse-ear cress).